Consider the following 167-residue polypeptide: Ribosome maturation factor RimM (167 aa).

The PRC barrel domain maps to 94–167 (EENEYFIKDL…VMVVHLLEGL (74 aa)).

It belongs to the RimM family. In terms of assembly, binds ribosomal protein uS19.

It is found in the cytoplasm. An accessory protein needed during the final step in the assembly of 30S ribosomal subunit, possibly for assembly of the head region. Essential for efficient processing of 16S rRNA. May be needed both before and after RbfA during the maturation of 16S rRNA. It has affinity for free ribosomal 30S subunits but not for 70S ribosomes. The protein is Ribosome maturation factor RimM of Thermoanaerobacter pseudethanolicus (strain ATCC 33223 / 39E) (Clostridium thermohydrosulfuricum).